A 537-amino-acid chain; its full sequence is MRPYYITTAIAYPNAAPHIGHAYEYIATDAIARFKRLDGLDVRFLTGTDEHGLKVAQAAEAAGVPTAQLARRNSGVFQRMQEALHISFDRFIRTTDADHYKAAKEIWRRMDAAGDIYLGTYSGWYSVRDERFFVDSETKLLDNGIRVAVETGTLVTWTEKEQTYFFRLSAYVDKLLAHYDANPDFIGPEVRRNEVISFVSGGLEDFSISRTSFDWGVQVPEHPDHVMYVWIDALTNYLTGAGFPDTDSELFGRYWPANLHMIGKDIIRFHAVYWPAFLMSAGIELPRRIFAHGFLHNHGEKMSKSVGNIVDPMALVQTFGVDQVRYFLLREIPFGQDGNYSEEAIITRMNTDLANEFGNLAQRSLSMVAKNLGGVVPEPSEFTSADTALLTTADGLLERVRGNFDGQAMNLALEAIWLMLGEANKYFSSQQPWILRKSESEADQARFRTVLYTTCEVVRIAALLVQPVMPESAGKMLDLLGQEEDQRAFTAVSVRLAPGTVLPPPTGVFPRYQPSEIEGADPVKSSSKRREHNKRRE.

The short motif at 11 to 21 (AYPNAAPHIGH) is the 'HIGH' region element. Residues 301-305 (KMSKS) carry the 'KMSKS' region motif. Lys-304 provides a ligand contact to ATP. The interval 503–537 (PPPTGVFPRYQPSEIEGADPVKSSSKRREHNKRRE) is disordered. Over residues 526 to 537 (SSKRREHNKRRE) the composition is skewed to basic residues.

The protein belongs to the class-I aminoacyl-tRNA synthetase family. MetG type 2B subfamily. Monomer.

It is found in the cytoplasm. The enzyme catalyses tRNA(Met) + L-methionine + ATP = L-methionyl-tRNA(Met) + AMP + diphosphate. Its function is as follows. Is required not only for elongation of protein synthesis but also for the initiation of all mRNA translation through initiator tRNA(fMet) aminoacylation. This chain is Methionine--tRNA ligase, found in Mycobacterium leprae (strain TN).